We begin with the raw amino-acid sequence, 296 residues long: Transcription repressor OFP3 (296 aa).

2 disordered regions span residues 27 to 115 (MSRS…SANA) and 131 to 196 (PSDQ…AHSS). Over residues 60-69 (LSSTAHHPQA) the composition is skewed to polar residues. Residues 78–88 (SFKRKIKRKTV) show a composition bias toward basic residues. The span at 92 to 115 (SSRLKLSTSSSLNHRSKSSSSANA) shows a compositional bias: low complexity. The segment covering 136–159 (FVHDPEPHSSIDIKDELSVRKLDD) has biased composition (basic and acidic residues). The OVATE domain maps to 228 to 287 (IVLSSVDPEKDFRESMVEMIMENKMREQKDLEDLLACYLSLNSSEYHDVIIKAFENTWLH).

In terms of assembly, interacts with BLH1, BLH3, KNAT5 and KNAT7.

The protein localises to the nucleus. Transcriptional repressor that may regulate multiple aspects of plant growth and development through the regulation of BEL1-LIKE (BLH) and KNOX TALE (KNAT) homeodomain transcription factors. The polypeptide is Transcription repressor OFP3 (OFP3) (Arabidopsis thaliana (Mouse-ear cress)).